The primary structure comprises 106 residues: PTS system fructose-like EIIB component 2 (106 aa).

The region spanning 1–103 is the PTS EIIB type-2 domain; sequence MTKIIAVTAC…IMSKIEAHLA (103 aa). Cys-10 acts as the Phosphocysteine intermediate in catalysis. A Phosphocysteine; by EIIA modification is found at Cys-10.

It localises to the cytoplasm. It catalyses the reaction D-fructose(out) + N(pros)-phospho-L-histidyl-[protein] = D-fructose 1-phosphate(in) + L-histidyl-[protein]. Its function is as follows. The phosphoenolpyruvate-dependent sugar phosphotransferase system (sugar PTS), a major carbohydrate active transport system, catalyzes the phosphorylation of incoming sugar substrates concomitantly with their translocation across the cell membrane. The enzyme II FrwABC PTS system is involved in fructose transport. The polypeptide is PTS system fructose-like EIIB component 2 (frwB) (Escherichia coli O157:H7).